The chain runs to 234 residues: Golgi SNAP receptor complex member 1 (234 aa).

Residues M1–K212 are Cytoplasmic-facing. The stretch at V54–R121 forms a coiled coil. Residues N213–I233 traverse the membrane as a helical; Anchor for type IV membrane protein segment. A topological domain (vesicular) is located at residue N234.

This sequence belongs to the GOSR1 family. As to quaternary structure, component of several multiprotein Golgi SNARE complexes.

The protein resides in the golgi apparatus membrane. Functionally, involved in transport from the ER to the Golgi apparatus as well as in intra-Golgi transport. It belongs to a super-family of proteins called t-SNAREs or soluble NSF (N-ethylmaleimide-sensitive factor) attachment protein receptor. Cooperates with ykt-6 for proper expression of Golgi-resident proteins. Required along with ykt-6 for normal embryonic development, seam cell division or differentiation, and ray formation. This is Golgi SNAP receptor complex member 1 (gos-28) from Caenorhabditis elegans.